The chain runs to 360 residues: Probable cinnamyl alcohol dehydrogenase 6 (360 aa).

Cysteine 48 is a Zn(2+) binding site. Threonine 50 contacts NADP(+). 7 residues coordinate Zn(2+): histidine 70, glutamate 71, cysteine 101, cysteine 104, cysteine 107, cysteine 115, and cysteine 164. NADP(+) contacts are provided by residues threonine 168, 192–197, 215–220, threonine 255, glycine 279, and 302–304; these read GLGGLG, STSPAK, and SMT.

This sequence belongs to the zinc-containing alcohol dehydrogenase family. In terms of assembly, homodimer. Zn(2+) serves as cofactor.

The enzyme catalyses (E)-cinnamyl alcohol + NADP(+) = (E)-cinnamaldehyde + NADPH + H(+). The catalysed reaction is (E)-coniferol + NADP(+) = (E)-coniferaldehyde + NADPH + H(+). It carries out the reaction (E)-sinapyl alcohol + NADP(+) = (E)-sinapaldehyde + NADPH + H(+). It catalyses the reaction (E)-4-coumaroyl alcohol + NADP(+) = (E)-4-coumaraldehyde + NADPH + H(+). The enzyme catalyses (E)-caffeyl alcohol + NADP(+) = (E)-caffeyl aldehyde + NADPH + H(+). It participates in aromatic compound metabolism; phenylpropanoid biosynthesis. Involved in lignin biosynthesis. Catalyzes the final step specific for the production of lignin monomers. Catalyzes the NADPH-dependent reduction of coniferaldehyde, 5-hydroxyconiferaldehyde, sinapaldehyde, 4-coumaraldehyde and caffeyl aldehyde to their respective alcohols. This Oryza sativa subsp. japonica (Rice) protein is Probable cinnamyl alcohol dehydrogenase 6.